A 208-amino-acid polypeptide reads, in one-letter code: FMN-dependent NADH:quinone oxidoreductase 2 (208 aa).

An FMN-binding site is contributed by 17–19 (SVS).

Belongs to the azoreductase type 1 family. As to quaternary structure, homodimer. It depends on FMN as a cofactor.

It carries out the reaction 2 a quinone + NADH + H(+) = 2 a 1,4-benzosemiquinone + NAD(+). The enzyme catalyses N,N-dimethyl-1,4-phenylenediamine + anthranilate + 2 NAD(+) = 2-(4-dimethylaminophenyl)diazenylbenzoate + 2 NADH + 2 H(+). In terms of biological role, quinone reductase that provides resistance to thiol-specific stress caused by electrophilic quinones. Its function is as follows. Also exhibits azoreductase activity. Catalyzes the reductive cleavage of the azo bond in aromatic azo compounds to the corresponding amines. In Halalkalibacterium halodurans (strain ATCC BAA-125 / DSM 18197 / FERM 7344 / JCM 9153 / C-125) (Bacillus halodurans), this protein is FMN-dependent NADH:quinone oxidoreductase 2.